Consider the following 156-residue polypeptide: UPF0266 membrane protein NT01EI_1718 (156 aa).

The next 3 helical transmembrane spans lie at 6 to 26, 46 to 63, and 67 to 87; these read IALL…EAIM, DSLI…RNIS, and APFT…IFYL.

It belongs to the UPF0266 family.

It is found in the cell inner membrane. This is UPF0266 membrane protein NT01EI_1718 from Edwardsiella ictaluri (strain 93-146).